The sequence spans 385 residues: D-alanine--D-alanine ligase (385 aa).

The 211-residue stretch at Lys165 to Glu375 folds into the ATP-grasp domain. ATP is bound at residue Ala201–Glu256. Mg(2+)-binding residues include Asp329, Glu342, and Asn344.

The protein belongs to the D-alanine--D-alanine ligase family. Requires Mg(2+) as cofactor. Mn(2+) is required as a cofactor.

The protein resides in the cytoplasm. It catalyses the reaction 2 D-alanine + ATP = D-alanyl-D-alanine + ADP + phosphate + H(+). It functions in the pathway cell wall biogenesis; peptidoglycan biosynthesis. Functionally, cell wall formation. This is D-alanine--D-alanine ligase from Streptomyces avermitilis (strain ATCC 31267 / DSM 46492 / JCM 5070 / NBRC 14893 / NCIMB 12804 / NRRL 8165 / MA-4680).